The sequence spans 448 residues: Tubulin beta-1 chain (448 aa).

8 residues coordinate GTP: Gln-11, Glu-69, Ser-138, Gly-142, Thr-143, Gly-144, Asn-204, and Asn-226. Glu-69 is a binding site for Mg(2+). The disordered stretch occupies residues 427–448; that stretch reads DATADEEGDLQEGESEYIEQEE. Positions 429 to 448 are enriched in acidic residues; that stretch reads TADEEGDLQEGESEYIEQEE.

This sequence belongs to the tubulin family. Dimer of alpha and beta chains. A typical microtubule is a hollow water-filled tube with an outer diameter of 25 nm and an inner diameter of 15 nM. Alpha-beta heterodimers associate head-to-tail to form protofilaments running lengthwise along the microtubule wall with the beta-tubulin subunit facing the microtubule plus end conferring a structural polarity. Microtubules usually have 13 protofilaments but different protofilament numbers can be found in some organisms and specialized cells. It depends on Mg(2+) as a cofactor.

The protein resides in the cytoplasm. The protein localises to the cytoskeleton. Its function is as follows. Tubulin is the major constituent of microtubules, a cylinder consisting of laterally associated linear protofilaments composed of alpha- and beta-tubulin heterodimers. Microtubules grow by the addition of GTP-tubulin dimers to the microtubule end, where a stabilizing cap forms. Below the cap, tubulin dimers are in GDP-bound state, owing to GTPase activity of alpha-tubulin. This is Tubulin beta-1 chain from Brugia pahangi (Filarial nematode worm).